The sequence spans 318 residues: Transaldolase (318 aa).

The Schiff-base intermediate with substrate role is filled by Lys-132.

This sequence belongs to the transaldolase family. Type 1 subfamily. In terms of assembly, homodimer.

It localises to the cytoplasm. It catalyses the reaction D-sedoheptulose 7-phosphate + D-glyceraldehyde 3-phosphate = D-erythrose 4-phosphate + beta-D-fructose 6-phosphate. It functions in the pathway carbohydrate degradation; pentose phosphate pathway; D-glyceraldehyde 3-phosphate and beta-D-fructose 6-phosphate from D-ribose 5-phosphate and D-xylulose 5-phosphate (non-oxidative stage): step 2/3. Its function is as follows. Transaldolase is important for the balance of metabolites in the pentose-phosphate pathway. This Shewanella oneidensis (strain ATCC 700550 / JCM 31522 / CIP 106686 / LMG 19005 / NCIMB 14063 / MR-1) protein is Transaldolase.